The following is a 226-amino-acid chain: Orotate phosphoribosyltransferase (226 aa).

Residue Lys30 participates in 5-phospho-alpha-D-ribose 1-diphosphate binding. Residue Phe38–Phe39 participates in orotate binding. 5-phospho-alpha-D-ribose 1-diphosphate-binding positions include Tyr76–Lys77, Arg106, Lys107, Lys110, His112, and Asp132–Ala140. Positions 136 and 164 each coordinate orotate.

The protein belongs to the purine/pyrimidine phosphoribosyltransferase family. PyrE subfamily. Homodimer.

The enzyme catalyses orotidine 5'-phosphate + diphosphate = orotate + 5-phospho-alpha-D-ribose 1-diphosphate. Its pathway is pyrimidine metabolism; UMP biosynthesis via de novo pathway; UMP from orotate: step 1/2. Functionally, catalyzes the transfer of a ribosyl phosphate group from 5-phosphoribose 1-diphosphate to orotate, leading to the formation of orotidine monophosphate (OMP). In Kluyveromyces lactis (strain ATCC 8585 / CBS 2359 / DSM 70799 / NBRC 1267 / NRRL Y-1140 / WM37) (Yeast), this protein is Orotate phosphoribosyltransferase (URA5).